We begin with the raw amino-acid sequence, 251 residues long: MTAQMFTIALLLSLSAIAAAGTIKTAPARTPSTQDDASFPPDGAPVKRFDAFTTGFGHSKRNFDEIDRSGFGFAKKNFDEIDRSGFGFNKRNFDEIDRSGFGFNKRNFDEIDRSGFGFNKRNFDEIDRSGFGFNKRNFDEIDRSGFGFNKRNFDEIDRSGFGFNKRNFDEIDRSGFGFVKRVYVPRYIANLYKRNFDEIDRSGFGFNKRNFDEIDRTGFGFHKRDYDVFPDKRNFDEIDRSGFGFVRRNVE.

The N-terminal stretch at 1–20 (MTAQMFTIALLLSLSAIAAA) is a signal peptide. Propeptides lie at residues 21–46 (GTIK…GAPV), 225–231 (DYDVFPD), and 249–251 (NVE).

This sequence belongs to the orcokinin family.

It localises to the secreted. In terms of biological role, myotropic peptides that enhance both the frequency and amplitude of spontaneous hindgut contractions. This chain is Orcokinin peptides type A, found in Procambarus clarkii (Red swamp crayfish).